Reading from the N-terminus, the 88-residue chain is Small ribosomal subunit protein uS19 (88 aa).

The protein belongs to the universal ribosomal protein uS19 family.

In terms of biological role, protein S19 forms a complex with S13 that binds strongly to the 16S ribosomal RNA. This chain is Small ribosomal subunit protein uS19, found in Ureaplasma parvum serovar 3 (strain ATCC 27815 / 27 / NCTC 11736).